Consider the following 324-residue polypeptide: Autolytic lysozyme (324 aa).

Active-site residues include aspartate 5 and glutamate 91. Tandem repeats lie at residues 212–234 (LLKR…IKDF), 235–254 (QSIM…SGAA), 255–277 (QQIF…TRYI), 278–300 (QYRV…VAAW), and 301–324 (QSNQ…LDEN). The interval 212–324 (LLKRGLEVDG…ATWSKLLDEN (113 aa)) is 5 X 23 AA tandem repeats.

The protein belongs to the glycosyl hydrolase 25 family. Monomer.

The protein resides in the secreted. It localises to the cytoplasm. It carries out the reaction Hydrolysis of (1-&gt;4)-beta-linkages between N-acetylmuramic acid and N-acetyl-D-glucosamine residues in a peptidoglycan and between N-acetyl-D-glucosamine residues in chitodextrins.. This Clostridium acetobutylicum (strain ATCC 824 / DSM 792 / JCM 1419 / IAM 19013 / LMG 5710 / NBRC 13948 / NRRL B-527 / VKM B-1787 / 2291 / W) protein is Autolytic lysozyme (lyc).